We begin with the raw amino-acid sequence, 999 residues long: Golgin subfamily A member 2 (999 aa).

A compositionally biased stretch (pro residues) spans 1–11 (MWPPRFPPPRP). Disordered regions lie at residues 1-80 (MWPP…PAPP) and 244-288 (ARQK…YNKD). Residues 1-86 (MWPPRFPPPR…PAPPTAATDT (86 aa)) form an interaction with p115/USO1 region. R18 and R30 each carry dimethylated arginine. A Nuclear localization signal motif is present at residues 26–49 (KKKLREYQQKNSPGVPAGAKKKKK). Phosphoserine occurs at positions 37, 66, 273, and 438. Residues 147–895 (LTSSNMKELE…VLRLVNERNE (749 aa)) are a coiled coil. A compositionally biased stretch (polar residues) spans 271-280 (TLSTVSTQQK). The interval 444-468 (SQMEEPPPPEPPAGPSEAEEQLQGE) is disordered. A compositionally biased stretch (pro residues) spans 448-457 (EPPPPEPPAG). Phosphoserine occurs at positions 697, 934, and 978. The tract at residues 989–999 (DENDEVKIMVV) is interaction with GORASP1/GRASP65.

The protein belongs to the GOLGA2 family. In terms of assembly, homodimer, may assemble into homohexamers. Homotetramer; forms a parallel homotetramer with a flexible rod-like structure that can give rise to I- and Y-shaped conformations. Interacts with GORASP1/GRASP65. The homooligomer forms a complex with GORASP1 with a 1:1 stoichiometry. Interacts with RAB1B that has been activated by GTP-binding. Interacts with p115/USO1; interaction with p115/USO1 inhibits interaction with STX5 and/or RAB1B. Interacts with STX5. Interacts with ZFPL1. Interacts with AKAP450/AKAP9; leading to recruit AKAP450/AKAP9 to the cis-Golgi. Post-translationally, phosphorylated at Ser-37 by CDK1 at the onset of mitosis, inhibiting the interaction with p115/USO1 and triggering Golgi disassembly. A report however suggests that Golgi disassembly is independent of phosphorylation at Ser-37. Phosphorylated at Ser-37 in prophase as the Golgi complex starts to break down, and remains phosphorylated during further breakdown and partitioning of the Golgi fragments in metaphase and anaphase. In telophase, GM130 is dephosphorylated by PP2A as the Golgi fragments start to reassemble. Cleaved by caspases at the onset of apoptosis. In terms of processing, methylation by PRMT5 is required for Golgi ribbon formation. Widely expressed. Detected in brain, kidney, lung, liver, spleen, heart, skeletal muscle, thymus and pancreas. Detected in spermatocytes. Present in oocytes during all oocyte meiotic maturation (at protein level).

It localises to the golgi apparatus. It is found in the cis-Golgi network membrane. The protein resides in the endoplasmic reticulum-Golgi intermediate compartment membrane. The protein localises to the cytoplasm. Its subcellular location is the cytoskeleton. It localises to the spindle pole. Its function is as follows. Peripheral membrane component of the cis-Golgi stack that acts as a membrane skeleton that maintains the structure of the Golgi apparatus, and as a vesicle thether that facilitates vesicle fusion to the Golgi membrane. Required for normal protein transport from the endoplasmic reticulum to the Golgi apparatus and the cell membrane. Together with p115/USO1 and STX5, involved in vesicle tethering and fusion at the cis-Golgi membrane to maintain the stacked and inter-connected structure of the Golgi apparatus. Plays a central role in mitotic Golgi disassembly: phosphorylation at Ser-37 by CDK1 at the onset of mitosis inhibits the interaction with p115/USO1, preventing tethering of COPI vesicles and thereby inhibiting transport through the Golgi apparatus during mitosis. Also plays a key role in spindle pole assembly and centrosome organization. Promotes the mitotic spindle pole assembly by activating the spindle assembly factor TPX2 to nucleate microtubules around the Golgi and capture them to couple mitotic membranes to the spindle: upon phosphorylation at the onset of mitosis, GOLGA2 interacts with importin-alpha via the nuclear localization signal region, leading to recruit importin-alpha to the Golgi membranes and liberate the spindle assembly factor TPX2 from importin-alpha. TPX2 then activates AURKA kinase and stimulates local microtubule nucleation. Upon filament assembly, nascent microtubules are further captured by GOLGA2, thus linking Golgi membranes to the spindle. Regulates the meiotic spindle pole assembly, probably via the same mechanism. Also regulates the centrosome organization. Also required for the Golgi ribbon formation and glycosylation of membrane and secretory proteins. This Mus musculus (Mouse) protein is Golgin subfamily A member 2 (Golga2).